Here is a 77-residue protein sequence, read N- to C-terminus: Acyl carrier protein (77 aa).

Residues 1 to 76 form the Carrier domain; that stretch reads MATFDDVKAV…DVVNYIDNLK (76 aa). At Ser-36 the chain carries O-(pantetheine 4'-phosphoryl)serine.

Belongs to the acyl carrier protein (ACP) family. In terms of processing, 4'-phosphopantetheine is transferred from CoA to a specific serine of apo-ACP by AcpS. This modification is essential for activity because fatty acids are bound in thioester linkage to the sulfhydryl of the prosthetic group.

It is found in the cytoplasm. It participates in lipid metabolism; fatty acid biosynthesis. In terms of biological role, carrier of the growing fatty acid chain in fatty acid biosynthesis. This chain is Acyl carrier protein, found in Campylobacter jejuni (strain RM1221).